The primary structure comprises 1070 residues: MPKRDDIKTILVIGSGPIVIGQAAEFDYAGTQACLSLKEEGYRVVLVNSNPATIMTDAEMADKVYIEPITLDFVSRIIRKERPDAILPTLGGQTGLNMAMELSAAGILDECNVEVLGTDLTAIKKAEDREAFRDLMNELGEPVPESDIIHNLDEAYTFVERIGYPVIVRPAYTLGGSGGGICHNEQELIETVTSGLKLSPVTQCLLEKSIAGFKEVEYEVMRDANNNAMVVCNMENIDPVGIHTGDSIVVAPSQTLSDREYQLLRDVSLKIIRALEIEGGCNVQLALDPDSYNYYVIEVNPRVSRSSALASKATGYPIAKLAAKIAVGLTLDEVRNPVTGTTFAHFEPTLDYVVAKIPRFAFDKFEQADRRLGTQMKATGEVMAIGRSWEEALLKAVRSLEIGADHLLLEEAENADEATLERKICFPEDDRLFFLAAALRRGQTIEQLHAKTKIDLFFLYKLSKTIELENRIKENPHNQEILAEAKRAGFSDAFLATCWNVDEQAIYDLRKAQNLFPVYKMVDTCAAEFESTTPYFYSTYEEENESTRSAKESVIVLGSGPIRIGQGVEFDYATVHSVWAIQQAGYEAIIINNNPETVSTDFSISDKLYFEPLTLEDVMHVIEIEQPLGVVVQFGGQTAINLADGLAKRGVKILGTSLEDTDRAENRDAFEKALEILQIPQPAGKTATSVEEAINVATDIGYPVLVRPSYVLGGRAMEIVESEEALKHYMTNAVKVNPKHPVLVDRYVSGQEVEVDAISDGENVLIPGIMEHIERAGVHSGDSIAVYPAQRLSSQVKNTIVDYTTRLATGLNIIGMLNIQYVVDGEEVFVIEVNPRSSRTAPFLSKITEIPMANVATRVILGENLIDLGYTPGLAPEKQEIFVKVPVFSFAKLRSVDTSLGPEMKSTGEVMGKDVTLEKALYKGFVASGTTMHDYGTVLLTVADRDKEEAVELAKRFNRIGFTIMATKGTASTLEEADIPVSQVKKIGENQETLIDYIRNGQVTLVVNTLTTGKRPERDGFQIRRESVENGIPVCTSLDTAEAILRVLESRSFELESMNASEVKQPKARV.

Residues Met1 to Glu401 form a carboxyphosphate synthetic domain region. ATP contacts are provided by Arg129, Arg169, Gly175, Gly176, Lys208, Ile210, Glu215, Gly241, Ile242, His243, Gln284, and Glu298. Residues Arg133–Val327 enclose the ATP-grasp 1 domain. Residues Gln284, Glu298, and Asn300 each contribute to the Mg(2+) site. The Mn(2+) site is built by Gln284, Glu298, and Asn300. The segment at Ile402 to Ser546 is oligomerization domain. Residues Thr547–Gly929 form a carbamoyl phosphate synthetic domain region. Positions Glu671 to Leu861 constitute an ATP-grasp 2 domain. Residues Arg707, Arg746, Val748, Glu752, Gly777, Val778, His779, Ser780, Gln820, and Glu832 each coordinate ATP. Mg(2+)-binding residues include Gln820, Glu832, and Asn834. Gln820, Glu832, and Asn834 together coordinate Mn(2+). The region spanning Thr930–Val1070 is the MGS-like domain. The interval Thr930–Val1070 is allosteric domain.

It belongs to the CarB family. As to quaternary structure, composed of two chains; the small (or glutamine) chain promotes the hydrolysis of glutamine to ammonia, which is used by the large (or ammonia) chain to synthesize carbamoyl phosphate. Tetramer of heterodimers (alpha,beta)4. Requires Mg(2+) as cofactor. The cofactor is Mn(2+).

The catalysed reaction is hydrogencarbonate + L-glutamine + 2 ATP + H2O = carbamoyl phosphate + L-glutamate + 2 ADP + phosphate + 2 H(+). It catalyses the reaction hydrogencarbonate + NH4(+) + 2 ATP = carbamoyl phosphate + 2 ADP + phosphate + 2 H(+). The protein operates within amino-acid biosynthesis; L-arginine biosynthesis; carbamoyl phosphate from bicarbonate: step 1/1. Its pathway is pyrimidine metabolism; UMP biosynthesis via de novo pathway; (S)-dihydroorotate from bicarbonate: step 1/3. Functionally, large subunit of the glutamine-dependent carbamoyl phosphate synthetase (CPSase). CPSase catalyzes the formation of carbamoyl phosphate from the ammonia moiety of glutamine, carbonate, and phosphate donated by ATP, constituting the first step of 2 biosynthetic pathways, one leading to arginine and/or urea and the other to pyrimidine nucleotides. The large subunit (synthetase) binds the substrates ammonia (free or transferred from glutamine from the small subunit), hydrogencarbonate and ATP and carries out an ATP-coupled ligase reaction, activating hydrogencarbonate by forming carboxy phosphate which reacts with ammonia to form carbamoyl phosphate. The polypeptide is Carbamoyl phosphate synthase large chain (Listeria monocytogenes serotype 4a (strain HCC23)).